A 112-amino-acid chain; its full sequence is Ribosome-binding factor A (112 aa).

It belongs to the RbfA family. As to quaternary structure, monomer. Binds 30S ribosomal subunits, but not 50S ribosomal subunits or 70S ribosomes.

The protein resides in the cytoplasm. Its function is as follows. One of several proteins that assist in the late maturation steps of the functional core of the 30S ribosomal subunit. Associates with free 30S ribosomal subunits (but not with 30S subunits that are part of 70S ribosomes or polysomes). Required for efficient processing of 16S rRNA. May interact with the 5'-terminal helix region of 16S rRNA. The protein is Ribosome-binding factor A of Mycoplasmopsis pulmonis (strain UAB CTIP) (Mycoplasma pulmonis).